The chain runs to 434 residues: Maltoporin (434 aa).

The signal sequence occupies residues 1–25 (MKMKAKWLPIAAAVTAALASQAAFA).

It belongs to the porin LamB (TC 1.B.3) family. As to quaternary structure, homotrimer formed of three 18-stranded antiparallel beta-barrels, containing three independent channels.

It localises to the cell outer membrane. It carries out the reaction beta-maltose(in) = beta-maltose(out). Functionally, involved in the transport of maltose and maltodextrins. The chain is Maltoporin from Aeromonas hydrophila.